The primary structure comprises 55 residues: Large ribosomal subunit protein bL33 (55 aa).

It belongs to the bacterial ribosomal protein bL33 family.

The protein is Large ribosomal subunit protein bL33 of Parvibaculum lavamentivorans (strain DS-1 / DSM 13023 / NCIMB 13966).